The chain runs to 184 residues: Peptide deformylase (184 aa).

The Fe cation site is built by Cys92 and His134. Glu135 is a catalytic residue. Fe cation is bound at residue His138.

Belongs to the polypeptide deformylase family. Fe(2+) is required as a cofactor.

The catalysed reaction is N-terminal N-formyl-L-methionyl-[peptide] + H2O = N-terminal L-methionyl-[peptide] + formate. Its function is as follows. Removes the formyl group from the N-terminal Met of newly synthesized proteins. Requires at least a dipeptide for an efficient rate of reaction. N-terminal L-methionine is a prerequisite for activity but the enzyme has broad specificity at other positions. The sequence is that of Peptide deformylase from Psychrobacter cryohalolentis (strain ATCC BAA-1226 / DSM 17306 / VKM B-2378 / K5).